A 737-amino-acid chain; its full sequence is MKNNKIYLLGACLLCAVTTFAQNVSLQPPPQQLIVQNKTIDLPAVYQLNGGEEANPHAVKVLKELLSGKQSSKKGMLISIGEKGDKSVRKYSRQIPDHKEGYYLSVNEKEIVLAGNDERGTYYALQTFAQLLKDGKLPEVEIKDYPSVRYRGVVEGFYGTPWSHQARLSQLKFYGKNKMNTYIYGPKDDPYHSAPNWRLPYPDKEAAQLQELVAVANENEVDFVWAIHPGQDIKWNKEDRDLLLAKFEKMYQLGVRSFAVFFDDISGEGTNPQKQAELLNYIDEKFAQVKPDINQLVMCPTEYNKSWSNPNGNYLTTLGDKLNPSIQIMWTGDRVISDITRDGISWINERIKRPAYIWWNFPVSDYVRDHLLLGPVYGNDTTIAKEMSGFVTNPMEHAESSKIAIYSVASYAWNPAKYDTWQTWKDAIRTILPSAAEELECFAMHNSDLGPNGHGYRREESMDIQPAAERFLKAFKEGKNYDKADFETLQYTFERMKESADILLMNTENKPLIVEITPWVHQFKLTAEMGEEVLKMVEGRNESYFLRKYNHVKALQQQMFYIDQTSNQNPYQPGVKTATRVIKPLIDRTFATVVKFFNQKFNAHLDATTDYMPHKMISNVEQIKNLPLQVKANRVLISPANEVVKWAAGNSVEIELDAIYPGENIQINFGKDAPCTWGRLEISTDGKEWKTVDLKQKESRLSAGLQKAPVKFVRFTNVSDEEQQVYLRQFVLTIEKK.

A signal peptide spans 1–21; the sequence is MKNNKIYLLGACLLCAVTTFA. The tract at residues 148 to 433 is catalytic domain; it reads VRYRGVVEGF…WKDAIRTILP (286 aa). In terms of domain architecture, GH84 spans 149 to 416; sequence RYRGVVEGFY…SVASYAWNPA (268 aa). A protein contacts are provided by glycine 156, lysine 187, and aspartate 263. Aspartate 264 functions as the Proton donor in the catalytic mechanism. A protein is bound by residues tyrosine 303, 358 to 360, aspartate 365, and asparagine 393; that span reads WWN.

This sequence belongs to the glycosyl hydrolase 84 family. As to quaternary structure, homodimer.

The enzyme catalyses 3-O-(N-acetyl-beta-D-glucosaminyl)-L-seryl-[protein] + H2O = N-acetyl-D-glucosamine + L-seryl-[protein]. The catalysed reaction is 3-O-(N-acetyl-beta-D-glucosaminyl)-L-threonyl-[protein] + H2O = L-threonyl-[protein] + N-acetyl-D-glucosamine. With respect to regulation, inhibited by 1,2-dideoxy-2'-methyl-alpha-D-glucopyranoso-[2,1-d]-delta 2'-thiazoline (NAG-thiazoline) and O-(2-acetamido-2-deoxy-D-glucopyranosylidene)amino-N-phenyl-carbamate (PUGNAc). Not inhibited by Streptozotocin. Its function is as follows. Can hydrolyze the glycosidic link of O-GlcNAcylated proteins. Can use p-nitrophenyl-beta-GlcNAc and 4-methylumbelliferone-GlcNAc as substrates (in vitro). The chain is O-GlcNAcase BT_4395 from Bacteroides thetaiotaomicron (strain ATCC 29148 / DSM 2079 / JCM 5827 / CCUG 10774 / NCTC 10582 / VPI-5482 / E50).